Reading from the N-terminus, the 185-residue chain is ATP-dependent protease subunit HslV (185 aa).

Thr13 is a catalytic residue. Na(+) is bound by residues Gly167, Cys170, and Thr173.

The protein belongs to the peptidase T1B family. HslV subfamily. As to quaternary structure, a double ring-shaped homohexamer of HslV is capped on each side by a ring-shaped HslU homohexamer. The assembly of the HslU/HslV complex is dependent on binding of ATP.

The protein localises to the cytoplasm. The catalysed reaction is ATP-dependent cleavage of peptide bonds with broad specificity.. With respect to regulation, allosterically activated by HslU binding. Protease subunit of a proteasome-like degradation complex believed to be a general protein degrading machinery. This is ATP-dependent protease subunit HslV from Sinorhizobium medicae (strain WSM419) (Ensifer medicae).